The following is a 444-amino-acid chain: Glutamate--tRNA ligase (444 aa).

Residues 12–22 (PSPTGFLHVGG) carry the 'HIGH' region motif. Positions 213–217 (KMSKR) match the 'KMSKS' region motif. Lys216 is an ATP binding site.

Belongs to the class-I aminoacyl-tRNA synthetase family. Glutamate--tRNA ligase type 1 subfamily. Monomer.

It localises to the cytoplasm. It carries out the reaction tRNA(Glu) + L-glutamate + ATP = L-glutamyl-tRNA(Glu) + AMP + diphosphate. Catalyzes the attachment of glutamate to tRNA(Glu) in a two-step reaction: glutamate is first activated by ATP to form Glu-AMP and then transferred to the acceptor end of tRNA(Glu). The polypeptide is Glutamate--tRNA ligase (Methylacidiphilum infernorum (isolate V4) (Methylokorus infernorum (strain V4))).